Consider the following 373-residue polypeptide: P2Y purinoceptor 2 (373 aa).

Over 1–32 the chain is Extracellular; that stretch reads MAADLEPWNSTINGTWEGDELGYKCRFNEDFK. N-linked (GlcNAc...) asparagine glycans are attached at residues Asn9 and Asn13. A helical transmembrane segment spans residues 33–59; that stretch reads YVLLPVSYGVVCVLGLCLNVVALYIFL. Topologically, residues 60 to 70 are cytoplasmic; it reads CRLKTWNASTT. The chain crosses the membrane as a helical span at residues 71-93; that stretch reads YMFHLAVSDSLYAASLPLLVYYY. At 94-110 the chain is on the extracellular side; that stretch reads ARGDHWPFSTVLCKLVR. A disulfide bond links Cys106 and Cys183. A helical transmembrane segment spans residues 111–129; it reads FLFYTNLYCSILFLTCISV. At 130-152 the chain is on the cytoplasmic side; it reads HRCLGVLRPLHSLRWGRARYARR. A helical transmembrane segment spans residues 153 to 172; the sequence is VAAVVWVLVLACQAPVLYFV. At 173-194 the chain is on the extracellular side; sequence TTSVRGTRITCHDTSARELFSH. A helical membrane pass occupies residues 195–220; that stretch reads FVAYSSVMLGLLFAVPFSVILVCYVL. Residues 221 to 246 lie on the Cytoplasmic side of the membrane; sequence MARRLLKPAYGTTGGLPRAKRKSVRT. A helical membrane pass occupies residues 247–269; it reads IALVLAVFALCFLPFHVTRTLYY. Residues 270 to 287 lie on the Extracellular side of the membrane; sequence SFRSLDLSCHTLNAINMA. Residues 288 to 309 form a helical membrane-spanning segment; it reads YKITRPLASANSCLDPVLYFLA. At 310 to 373 the chain is on the cytoplasmic side; that stretch reads GQRLVRFARD…AGSETKDIRL (64 aa). A disordered region spans residues 318-373; sequence RDAKPPTEPTPSPQARRKLGLHRPNRTVRKDLSVSSDDSRRTESTPAGSETKDIRL. The span at 332–344 shows a compositional bias: basic residues; the sequence is ARRKLGLHRPNRT. Over residues 345-360 the composition is skewed to basic and acidic residues; the sequence is VRKDLSVSSDDSRRTE.

Belongs to the G-protein coupled receptor 1 family. In terms of tissue distribution, spleen, testis, kidney, liver, lung, heart and brain.

The protein localises to the cell membrane. Functionally, receptor for ATP and UTP coupled to G-proteins that activate a phosphatidylinositol-calcium second messenger system. The affinity range is UTP = ATP &gt; ATP-gamma-S &gt;&gt; 2-methylthio-ATP = ADP. This is P2Y purinoceptor 2 (P2ry2) from Mus musculus (Mouse).